The sequence spans 260 residues: UPF0246 protein Bcenmc03_2247 (260 aa).

The protein belongs to the UPF0246 family.

The chain is UPF0246 protein Bcenmc03_2247 from Burkholderia orbicola (strain MC0-3).